The chain runs to 367 residues: Apolipoprotein A-V (367 aa).

The first 20 residues, 1-20 (MVAVLTWALALLSAFATVQT), serve as a signal peptide directing secretion. Serine 56 bears the Phosphoserine mark. A disordered region spans residues 71-90 (LGPLSGQGREPPGLPHDPEG).

This sequence belongs to the apolipoprotein A1/A4/E family. In terms of assembly, interacts with GPIHBP1. Interacts with SORL1; this interaction leads to APOA5 internalization and sorting either to lysosomes and degradation, or to the trans-Golgi network. Post-translationally, phosphorylated by FAM20C in the extracellular medium.

It is found in the secreted. Its subcellular location is the early endosome. It localises to the late endosome. The protein localises to the golgi apparatus. The protein resides in the trans-Golgi network. Minor apolipoprotein mainly associated with HDL and to a lesser extent with VLDL. May also be associated with chylomicrons. Important determinant of plasma triglyceride (TG) levels by both being a potent stimulator of apo-CII lipoprotein lipase (LPL) TG hydrolysis and an inhibitor of the hepatic VLDL-TG production rate (without affecting the VLDL-apoB production rate). Activates poorly lecithin:cholesterol acyltransferase (LCAT) and does not enhance efflux of cholesterol from macrophages. Binds heparin. The chain is Apolipoprotein A-V (APOA5) from Neomonachus schauinslandi (Hawaiian monk seal).